Here is a 3078-residue protein sequence, read N- to C-terminus: Probable polyketide synthase 44 (3078 aa).

One can recognise a Ketosynthase family 3 (KS3) domain in the interval 10–435 (DNDVAIIGIG…GSNACLILTE (426 aa)). Catalysis depends on for beta-ketoacyl synthase activity residues Cys175, His320, and His358. An acyl/malonyl transferase region spans residues 627-660 (GILASISIGHSLGEVSSAVCSGMIDLETGCFIIY). Catalysis depends on Ser637, which acts as the For acyl/malonyl transferase activity. The tract at residues 952-1072 (TNHLGYRNER…GRLSTTKHND (121 aa)) is N-terminal hotdog fold. Residues 952–1239 (TNHLGYRNER…YTQLTPYKNQ (288 aa)) enclose the PKS/mFAS DH domain. His984 serves as the catalytic Proton acceptor; for dehydratase activity. The segment at 1088-1239 (NFVTIQKKEL…YTQLTPYKNQ (152 aa)) is C-terminal hotdog fold. The Proton donor; for dehydratase activity role is filled by Asp1150. Residues 2080-2119 (LENIKTDLSNKNDNNNNNNNNNNDNKESNIKELLDNDDDE) are a coiled coil. The disordered stretch occupies residues 2087–2108 (LSNKNDNNNNNNNNNNDNKESN). Positions 2090-2102 (KNDNNNNNNNNNN) are enriched in low complexity. In terms of domain architecture, Carrier spans 2558-2636 (SDDLSIREQI…QLIQSVTDAM (79 aa)). Ser2596 is modified (O-(pantetheine 4'-phosphoryl)serine). A helical transmembrane segment spans residues 2694-2714 (NTVFLTGSSGFIGIYILFYLI).

The cofactor is pantetheine 4'-phosphate.

It is found in the membrane. Functionally, probable polyketide synthase. The protein is Probable polyketide synthase 44 (pks44) of Dictyostelium discoideum (Social amoeba).